A 156-amino-acid polypeptide reads, in one-letter code: Small ribosomal subunit protein uS7 (156 aa).

Belongs to the universal ribosomal protein uS7 family. Part of the 30S ribosomal subunit. Contacts proteins S9 and S11.

One of the primary rRNA binding proteins, it binds directly to 16S rRNA where it nucleates assembly of the head domain of the 30S subunit. Is located at the subunit interface close to the decoding center, probably blocks exit of the E-site tRNA. This is Small ribosomal subunit protein uS7 from Erwinia tasmaniensis (strain DSM 17950 / CFBP 7177 / CIP 109463 / NCPPB 4357 / Et1/99).